We begin with the raw amino-acid sequence, 180 residues long: Large ribosomal subunit protein uL6 (180 aa).

It belongs to the universal ribosomal protein uL6 family. As to quaternary structure, part of the 50S ribosomal subunit.

Its function is as follows. This protein binds to the 23S rRNA, and is important in its secondary structure. It is located near the subunit interface in the base of the L7/L12 stalk, and near the tRNA binding site of the peptidyltransferase center. The sequence is that of Large ribosomal subunit protein uL6 from Borreliella afzelii (strain PKo) (Borrelia afzelii).